Reading from the N-terminus, the 221-residue chain is 7-cyano-7-deazaguanine synthase (221 aa).

Position 9–19 (9–19 (YSGGMDSFTVL)) interacts with ATP. Zn(2+) is bound by residues Cys-186, Cys-194, Cys-197, and Cys-200.

It belongs to the QueC family. Zn(2+) serves as cofactor.

The catalysed reaction is 7-carboxy-7-deazaguanine + NH4(+) + ATP = 7-cyano-7-deazaguanine + ADP + phosphate + H2O + H(+). It functions in the pathway purine metabolism; 7-cyano-7-deazaguanine biosynthesis. Functionally, catalyzes the ATP-dependent conversion of 7-carboxy-7-deazaguanine (CDG) to 7-cyano-7-deazaguanine (preQ(0)). The protein is 7-cyano-7-deazaguanine synthase of Psychromonas ingrahamii (strain DSM 17664 / CCUG 51855 / 37).